Here is an 86-residue protein sequence, read N- to C-terminus: Gas vesicle protein M (86 aa).

It belongs to the gas vesicle GvpA family. GvpF to GvpM interact with each other in vitro, and may form multi-subunit complex(es). Might interact with GvpA.

Its subcellular location is the gas vesicle. Proteins GvpF to GvpM might be involved in nucleating gas vesicle formation. A minor component of the gas vesicle. Gas vesicles are small, hollow, gas filled protein structures found in some microorganisms. They allow positioning of halobacteria at the optimal depth for growth in the poorly aerated, shallow brine pools of their habitat. In terms of biological role, expression of a 9.5 kb mc-vac DNA fragment containing 2 divergently transcribed regions (gvpD-gvpE-gvpF-gvpG-gvpH-gvpI-gvpJ-gvpK-gvpL-gvpM and gvpA-gvpC-gvpN-gvpO) allows H.volcanii to produce gas vesicles. This chain is Gas vesicle protein M, found in Haloferax mediterranei (strain ATCC 33500 / DSM 1411 / JCM 8866 / NBRC 14739 / NCIMB 2177 / R-4) (Halobacterium mediterranei).